The primary structure comprises 54 residues: Rubredoxin-1 (54 aa).

A Rubredoxin-like domain is found at 1-52 (MKKWECVVCGFIYDEAEGLPDEGIEPGTAWNNVPEDWVCPDCGVGKDDFEMV). Residues Cys-6, Cys-9, Cys-39, and Cys-42 each contribute to the Fe cation site.

It belongs to the rubredoxin family. Fe(3+) is required as a cofactor.

The protein resides in the cytoplasm. The protein operates within hydrocarbon metabolism; alkane degradation. Functionally, involved in the hydrocarbon hydroxylating system, which transfers electrons from NADH to rubredoxin reductase and then through rubredoxin to alkane 1 monooxygenase. This chain is Rubredoxin-1 (rubA), found in Alcanivorax borkumensis (strain ATCC 700651 / DSM 11573 / NCIMB 13689 / SK2).